The sequence spans 99 residues: Small ribosomal subunit protein bS18 (99 aa).

The span at 1 to 25 (MAEDHPSVDLDTHLSSPRESEESAP) shows a compositional bias: basic and acidic residues. The disordered stretch occupies residues 1–28 (MAEDHPSVDLDTHLSSPRESEESAPKKN).

This sequence belongs to the bacterial ribosomal protein bS18 family. In terms of assembly, part of the 30S ribosomal subunit. Forms a tight heterodimer with protein bS6.

In terms of biological role, binds as a heterodimer with protein bS6 to the central domain of the 16S rRNA, where it helps stabilize the platform of the 30S subunit. In Treponema pallidum (strain Nichols), this protein is Small ribosomal subunit protein bS18.